Consider the following 362-residue polypeptide: DNA replication and repair protein RecF (362 aa).

Position 30 to 37 (30 to 37) interacts with ATP; it reads GDNGAGKT.

It belongs to the RecF family.

The protein resides in the cytoplasm. The RecF protein is involved in DNA metabolism; it is required for DNA replication and normal SOS inducibility. RecF binds preferentially to single-stranded, linear DNA. It also seems to bind ATP. The protein is DNA replication and repair protein RecF of Xanthomonas oryzae pv. oryzae (strain MAFF 311018).